The primary structure comprises 499 residues: Lysine--tRNA ligase (499 aa).

The Mg(2+) site is built by E408 and E415.

This sequence belongs to the class-II aminoacyl-tRNA synthetase family. In terms of assembly, homodimer. It depends on Mg(2+) as a cofactor.

The protein resides in the cytoplasm. It carries out the reaction tRNA(Lys) + L-lysine + ATP = L-lysyl-tRNA(Lys) + AMP + diphosphate. In Bacillus cereus (strain G9842), this protein is Lysine--tRNA ligase.